Reading from the N-terminus, the 75-residue chain is Small ribosomal subunit protein bS18c (75 aa).

The protein belongs to the bacterial ribosomal protein bS18 family. In terms of assembly, part of the 30S ribosomal subunit.

Its subcellular location is the plastid. The protein resides in the chloroplast. This is Small ribosomal subunit protein bS18c from Angiopteris evecta (Mule's foot fern).